Here is a 98-residue protein sequence, read N- to C-terminus: NADH-ubiquinone oxidoreductase chain 4L (98 aa).

The next 3 membrane-spanning stretches (helical) occupy residues 1–21, 29–49, and 61–81; these read MSMV…GMLV, SLLC…VTIL, and IILL…LVMV.

It belongs to the complex I subunit 4L family. Core subunit of respiratory chain NADH dehydrogenase (Complex I) which is composed of 45 different subunits.

The protein resides in the mitochondrion inner membrane. It catalyses the reaction a ubiquinone + NADH + 5 H(+)(in) = a ubiquinol + NAD(+) + 4 H(+)(out). Functionally, core subunit of the mitochondrial membrane respiratory chain NADH dehydrogenase (Complex I) which catalyzes electron transfer from NADH through the respiratory chain, using ubiquinone as an electron acceptor. Part of the enzyme membrane arm which is embedded in the lipid bilayer and involved in proton translocation. This is NADH-ubiquinone oxidoreductase chain 4L (MT-ND4L) from Odobenus rosmarus rosmarus (Atlantic walrus).